The chain runs to 884 residues: Cadherin-1 (884 aa).

The first 23 residues, 1–23, serve as a signal peptide directing secretion; it reads MGARCRSFSALLLLLQVSSWLCQ. Residues 24–156 constitute a propeptide that is removed on maturation; sequence ELEPESCSPG…VYPGLRRQKR (133 aa). The interval 119–139 is disordered; sequence KSMGHHHHRHHHRDPASESNP. Basic residues predominate over residues 121–131; sequence MGHHHHRHHHR. Cadherin domains lie at 157–264, 265–377, 378–488, 489–595, and 596–699; these read DWVI…RPEF, TQEV…APVF, NPST…APIF, MPAE…DNAP, and IPEP…NCMK. Topologically, residues 157–709 are extracellular; sequence DWVIPPISCP…AGIVAAGLQV (553 aa). Asp259 contributes to the Ca(2+) binding site. Residues Ser282 and Ser287 are each glycosylated (O-linked (Man...) serine). Residue Asp290 coordinates Ca(2+). 4 O-linked (Man...) threonine glycosylation sites follow: Thr360, Thr472, Thr474, and Thr511. The N-linked (GlcNAc...) asparagine glycan is linked to Asn560. Thr578, Thr580, and Thr582 each carry an O-linked (Man...) threonine glycan. An N-linked (GlcNAc...) asparagine glycan is attached at Asn639. The chain crosses the membrane as a helical span at residues 710-733; the sequence is PAILGILGGILALLILILLLLLFL. The Cytoplasmic portion of the chain corresponds to 734-884; it reads RRRTVVKEPL…ADMYGGGEDD (151 aa). A disordered region spans residues 749-808; sequence DTRDNVYYYDEEGGGEEDQDFDLSQLHRGLDARPEVTRNDVAPTLMSVPQYRPRPANPDE. Tyr755, Tyr756, and Tyr757 each carry phosphotyrosine; by SRC. Residues 757 to 769 are compositionally biased toward acidic residues; the sequence is YDEEGGGEEDQDF. The tract at residues 760–771 is required for binding CTNND1 and PSEN1; sequence EGGGEEDQDFDL. Ser772 carries the post-translational modification Phosphoserine. Basic and acidic residues predominate over residues 776 to 786; sequence RGLDARPEVTR. 4 positions are modified to phosphoserine: Ser795, Ser840, Ser842, and Ser848. A required for binding alpha, beta and gamma catenins region spans residues 813–884; it reads IDENLKAADS…ADMYGGGEDD (72 aa).

As to quaternary structure, homodimer; disulfide-linked. Component of an E-cadherin/ catenin adhesion complex composed of at least E-cadherin/CDH1, beta-catenin/CTNNB1 or gamma-catenin/JUP, and potentially alpha-catenin/CTNNA1; the complex is located to adherens junctions. Found in a complex composed of CDH1, RAP1A and PKP3; PKP3 acts as a scaffold protein within the complex, the complex is required for CDH1 localization to mature desmosome cell junctions. Interacts with the TRPV4 and CTNNB1 complex. Interacts with CTNND1. The stable association of CTNNA1 is controversial as CTNNA1 was shown not to bind to F-actin when assembled in the complex. Alternatively, the CTNNA1-containing complex may be linked to F-actin by other proteins such as LIMA1. Interaction with PSEN1, cleaves CDH1 resulting in the disassociation of cadherin-based adherens junctions (CAJs). Interacts with AJAP1 and DLGAP5. Interacts with TBC1D2. Interacts with LIMA1. Interacts with CAV1. Interacts with PIP5K1C. Interacts with RAB8B. Interacts with DDR1; this stabilizes CDH1 at the cell surface and inhibits its internalization. Interacts with RAPGEF2. Interacts with KLRG1. Forms a ternary complex composed of ADAM10, CADH1 and EPHA4; within the complex, CADH1 is cleaved by ADAM10 which disrupts adherens junctions. Interacts with SPEF1. Interacts with CTNNB1 and PKP2. Interacts with AMOTL2; the interaction may facilitate binding of radial actin fibers to cell junction complexes. Interacts with DSG3; the interaction is required for CDH1 localization to developing adherens junctions. Post-translationally, during apoptosis or with calcium influx, cleaved by a membrane-bound metalloproteinase (ADAM10), PS1/gamma-secretase and caspase-3. Processing by the metalloproteinase, induced by calcium influx, causes disruption of cell-cell adhesion and the subsequent release of beta-catenin into the cytoplasm. The residual membrane-tethered cleavage product is rapidly degraded via an intracellular proteolytic pathway. Cleavage by caspase-3 releases the cytoplasmic tail resulting in disintegration of the actin microfilament system. The gamma-secretase-mediated cleavage promotes disassembly of adherens junctions. During development of the cochlear organ of Corti, cleavage by ADAM10 at adherens junctions promotes pillar cell separation. In terms of processing, O-glycosylated. O-manosylated by TMTC1, TMTC2, TMTC3 or TMTC4. Ser-287 and Thr-511 are O-manosylated by TMTC2 or TMTC4 but not TMTC1 or TMTC3. N-glycosylation at Asn-639 is essential for expression, folding and trafficking. Addition of bisecting N-acetylglucosamine by MGAT3 modulates its cell membrane location. Post-translationally, ubiquitinated by a SCF complex containing SKP2, which requires prior phosphorylation by CK1/CSNK1A1. Ubiquitinated by CBLL1/HAKAI, requires prior phosphorylation at Tyr-756. As to expression, expressed in inner and outer pillar cells of the organ of Corti (at protein level). Expressed in granuloma macrophages (at protein level). Expressed in the epidermal keratinocytes of the skin from birth (at protein level). Expressed in non-neural epithelial tissues.

It is found in the cell junction. The protein resides in the adherens junction. It localises to the cell membrane. The protein localises to the endosome. Its subcellular location is the golgi apparatus. It is found in the trans-Golgi network. The protein resides in the cytoplasm. It localises to the desmosome. Cadherins are calcium-dependent cell adhesion proteins. They preferentially interact with themselves in a homophilic manner in connecting cells; cadherins may thus contribute to the sorting of heterogeneous cell types. CDH1 is involved in mechanisms regulating cell-cell adhesions, mobility and proliferation of epithelial cells. Promotes organization of radial actin fiber structure and cellular response to contractile forces, via its interaction with AMOTL2 which facilitates anchoring of radial actin fibers to CDH1 junction complexes at the cell membrane. Plays a role in the early stages of desmosome cell-cell junction formation via facilitating the recruitment of DSG2 and DSP to desmosome plaques. Has a potent invasive suppressor role. It is a ligand for integrin alpha-E/beta-7. Its function is as follows. E-Cad/CTF2 promotes non-amyloidogenic degradation of Abeta precursors. Has a strong inhibitory effect on APP C99 and C83 production. Functionally, (Microbial infection) Does not function as a receptor for L.monocytogenes internalin A (InlA); mutating a single surface-exposed residue confers receptor activity to this protein and promotes uptake of the bacteria. This Mus musculus (Mouse) protein is Cadherin-1 (Cdh1).